Reading from the N-terminus, the 264-residue chain is Small ribosomal subunit protein uS3 (264 aa).

Residues 39-107 (VREYLKKKLK…PVHVNIEEIR (69 aa)) form the KH type-2 domain. Residues 217–264 (EEVAEEKRPRRNARPGDRRPRRDGEGAPAGARRGAPRRGGAGDGKTGE) are disordered. The segment covering 230–241 (RPGDRRPRRDGE) has biased composition (basic and acidic residues). Over residues 253–264 (RRGGAGDGKTGE) the composition is skewed to gly residues.

This sequence belongs to the universal ribosomal protein uS3 family. In terms of assembly, part of the 30S ribosomal subunit. Forms a tight complex with proteins S10 and S14.

Its function is as follows. Binds the lower part of the 30S subunit head. Binds mRNA in the 70S ribosome, positioning it for translation. The chain is Small ribosomal subunit protein uS3 from Paraburkholderia phymatum (strain DSM 17167 / CIP 108236 / LMG 21445 / STM815) (Burkholderia phymatum).